Consider the following 434-residue polypeptide: Forkhead box protein A2-A (434 aa).

The fork-head DNA-binding region spans 149-243 (KPPYSYISLI…ENGCYLRRQK (95 aa)). Residues 249–262 (KKPSLREGGGKKLS) show a composition bias toward basic and acidic residues. Disordered regions lie at residues 249 to 339 (KKPS…QSHL) and 408 to 434 (SGLE…MNSS). Low complexity-rich tracts occupy residues 263 to 291 (EGAS…SSSP) and 317 to 333 (ASQA…VLSH). The segment covering 408–422 (SGLESSPITSDTSYY) has biased composition (polar residues).

In terms of tissue distribution, at gastrula stage, expressed in both the anterior and posterior endoderm, with endodermal expression persisting into early tailbud stages. Expression is absent in gastrula stage ectoderm. During tailbud stages, expressed in the pharyngeal region, the neural floor plate, the midbrain, hindbrain and in cranial neural crest cells. Expressed in the foregut of hatching larvae. In tadpoles, expressed in the pharyngeal pouches and in other anterior endodermal regions. Within the tadpole nervous system, expressed in the neural floor plate, at high levels in the ventral midbrain and hindbrain, and at lower levels in the spinal cord. Expressed in the adult lung and brain.

The protein localises to the nucleus. Acts as a transcriptional activator during early development, limiting the extent of mesoderm formation in the gastrula. Binds to DNA via the target sequence 5'-GT[AC]AACA-3', with 5'-GTAAACA-3' being the preferred binding site. This chain is Forkhead box protein A2-A (foxa2-a), found in Xenopus laevis (African clawed frog).